Consider the following 471-residue polypeptide: Cysteine--tRNA ligase (471 aa).

Position 29 (cysteine 29) interacts with Zn(2+). Positions leucine 31–histidine 41 match the 'HIGH' region motif. Zn(2+) is bound by residues cysteine 215, histidine 240, and glutamate 244. Residues lysine 271–serine 275 carry the 'KMSKS' region motif. Position 274 (lysine 274) interacts with ATP.

The protein belongs to the class-I aminoacyl-tRNA synthetase family. In terms of assembly, monomer. It depends on Zn(2+) as a cofactor.

The protein localises to the cytoplasm. It catalyses the reaction tRNA(Cys) + L-cysteine + ATP = L-cysteinyl-tRNA(Cys) + AMP + diphosphate. In Nocardioides sp. (strain ATCC BAA-499 / JS614), this protein is Cysteine--tRNA ligase.